Here is a 524-residue protein sequence, read N- to C-terminus: Lysophospholipid acyltransferase LPCAT4 (524 aa).

The next 2 helical transmembrane spans lie at 40-62 (CLLG…FLLW) and 87-107 (TVCH…LGFL). An HXXXXD motif motif is present at residues 129 to 134 (HSTFFD). Residue asparagine 152 is glycosylated (N-linked (GlcNAc...) asparagine). Positions 490-524 (PHKPRSTSQIPNASSPSSPTALANGTVQAPKQKGD) are disordered. The span at 495-518 (STSQIPNASSPSSPTALANGTVQA) shows a compositional bias: polar residues.

The protein belongs to the 1-acyl-sn-glycerol-3-phosphate acyltransferase family. Widely expressed with much higher level in brain. Expressed in erythroleukemic cells but not in reticulocytes.

The protein localises to the endoplasmic reticulum membrane. It catalyses the reaction a 1-acyl-sn-glycero-3-phosphoethanolamine + an acyl-CoA = a 1,2-diacyl-sn-glycero-3-phosphoethanolamine + CoA. It carries out the reaction a 1-O-(1Z-alkenyl)-sn-glycero-3-phosphoethanolamine + an acyl-CoA = a 1-O-(1Z-alkenyl)-2-acyl-sn-glycero-3-phosphoethanolamine + CoA. The enzyme catalyses a 1-acyl-sn-glycero-3-phosphocholine + an acyl-CoA = a 1,2-diacyl-sn-glycero-3-phosphocholine + CoA. The catalysed reaction is a 1-O-alkyl-sn-glycero-3-phosphocholine + acetyl-CoA = a 1-O-alkyl-2-acetyl-sn-glycero-3-phosphocholine + CoA. It catalyses the reaction a 1-acyl-sn-glycero-3-phospho-L-serine + an acyl-CoA = a 1,2-diacyl-sn-glycero-3-phospho-L-serine + CoA. It carries out the reaction octanoyl-CoA + a 1-acyl-sn-glycero-3-phosphoethanolamine = 1-acyl-2-octanoyl-sn-glycero-3-phosphoethanolamine + CoA. The enzyme catalyses a 1-acyl-sn-glycero-3-phosphoethanolamine + hexadecanoyl-CoA = 1-acyl-2-hexadecanoyl-sn-glycero-3-phosphoethanolamine + CoA. The catalysed reaction is a 1-acyl-sn-glycero-3-phosphoethanolamine + octadecanoyl-CoA = 1-acyl-2-octadecanoyl-sn-glycero-3-phosphoethanolamine + CoA. It catalyses the reaction a 1-acyl-sn-glycero-3-phosphoethanolamine + (9Z)-octadecenoyl-CoA = 1-acyl-2-(9Z)-octadecenoyl-sn-glycero-3-phosphoethanolamine + CoA. It carries out the reaction a 1-acyl-sn-glycero-3-phosphoethanolamine + (5Z,8Z,11Z,14Z)-eicosatetraenoyl-CoA = 1-acyl-2-(5Z,8Z,11Z,14Z)-eicosatetraenoyl-sn-glycero-3-phosphoethanolamine + CoA. The enzyme catalyses a 1-O-(1Z-alkenyl)-sn-glycero-3-phosphoethanolamine + octanoyl-CoA = 1-O-(1Z)-alkenyl-2-octanoyl-sn-glycero-3-phosphoethanolamine + CoA. The catalysed reaction is a 1-O-(1Z-alkenyl)-sn-glycero-3-phosphoethanolamine + hexadecanoyl-CoA = 1-O-(1Z)-alkenyl-2-hexadecanoyl-sn-glycero-3-phosphoethanolamine + CoA. It catalyses the reaction a 1-O-(1Z-alkenyl)-sn-glycero-3-phosphoethanolamine + octadecanoyl-CoA = 1-O-(1Z)-alkenyl-2-octadecanoyl-sn-glycero-3-phosphoethanolamine + CoA. It carries out the reaction a 1-O-(1Z-alkenyl)-sn-glycero-3-phosphoethanolamine + (9Z)-octadecenoyl-CoA = 1-O-(1Z)-alkenyl-2-(9Z)-octadecenoyl-sn-glycero-3-phosphoethanolamine + CoA. The enzyme catalyses a 1-O-(1Z-alkenyl)-sn-glycero-3-phosphoethanolamine + (5Z,8Z,11Z,14Z)-eicosatetraenoyl-CoA = 1-O-(1Z)-alkenyl-2-(5Z,8Z,11Z,14Z)-eicosatetraenoyl-sn-glycero-3-phosphoethanolamine + CoA. The catalysed reaction is a 1-acyl-sn-glycero-3-phosphocholine + hexadecanoyl-CoA = 1-acyl-2-hexadecanoyl-sn-glycero-3-phosphocholine + CoA. It catalyses the reaction a 1-acyl-sn-glycero-3-phosphocholine + (9Z)-octadecenoyl-CoA = a 1-acyl-2-(9Z)-octadecenoyl-sn-glycero-3-phosphocholine + CoA. It carries out the reaction 1-O-hexadecyl-sn-glycero-3-phosphocholine + (9Z)-octadecenoyl-CoA = 1-O-hexadecyl-2-(9Z)-octadecenoyl-sn-glycero-3-phosphocholine + CoA. The enzyme catalyses 1-O-hexadecyl-sn-glycero-3-phosphocholine + (5Z,8Z,11Z,14Z)-eicosatetraenoyl-CoA = 1-O-hexadecyl-2-(5Z,8Z,11Z,14Z)-eicosatetraenoyl-sn-glycero-3-phosphocholine + CoA. The catalysed reaction is 1-hexadecanoyl-sn-glycero-3-phospho-L-serine + (9Z)-octadecenoyl-CoA = 1-hexadecanoyl-2-(9Z-octadecenoyl)-sn-glycero-3-phospho-L-serine + CoA. It catalyses the reaction 1-octadecanoyl-sn-glycero-3-phospho-(1'-sn-glycerol) + (9Z)-octadecenoyl-CoA = 1-octadecanoyl-2-(9Z-octadecenoyl)-sn-glycero-3-phospho-(1'-sn-glycerol) + CoA. It carries out the reaction 1-octadecanoyl-sn-glycero-3-phospho-(1'-sn-glycerol) + (5Z,8Z,11Z,14Z)-eicosatetraenoyl-CoA = 1-octadecanoyl-2-(5Z,8Z,11Z,14Z-eicosatetraenoyl)-sn-glycero-3-phospho-(1'-sn-glycerol) + CoA. The protein operates within lipid metabolism; phospholipid metabolism. Its function is as follows. Displays acyl-CoA-dependent lysophospholipid acyltransferase activity with a subset of lysophospholipids as substrates; converts lysophosphatidylethanolamine to phosphatidylethanolamine, 1-alkenyl-lysophatidylethanolamine to 1-alkenyl-phosphatidylethanolamine, lysophosphatidylglycerol and alkyl-lysophosphatidylcholine to phosphatidylglycerol and alkyl-phosphatidylcholine, respectively. In contrast, has no lysophosphatidylinositol, glycerol-3-phosphate, diacylglycerol or lysophosphatidic acid acyltransferase activity. Prefers long chain acyl-CoAs (C16, C18) as acyl donors. Converts lysophosphatidylcholine to phosphatidycholine. This is Lysophospholipid acyltransferase LPCAT4 (Lpcat4) from Mus musculus (Mouse).